The sequence spans 670 residues: MAETKIIYHMDEEETPYLVKLPVAPERVTLADFKNVLSNRPVHAYKFFFKSMDQDFGVVKEEIFDDNAKLPCFNGRVVSWLVLAEGAHSDAGSQGTDSHTDLPPPLERTGGIGDSRPPSFHPNVASSRDGMDNETGTESMVSHRRERARRRNREEAARTNGHPRGDRRRDVGLPPDSASTALSSELESSSFVDSDEDGSTSRLSSSTEQSTSSRLIRKHKRRRRKQRLRQADRASSFSSITDSTMSLNIVTVTLNMERHHFLGISIVGQSNDRGDGGIYIGSIMKGGAVAADGRIEPGDMLLQVNDVNFENMSNDDAVRVLREIVSQTGPISLTVAKCWDPTPRSYFTVPRADPVRPIDPAAWLSHTAALTGALPRYELEEAPLTVKSDMSAVVRVMQLPDSGLEIRDRMWLKITIANAVIGADVVDWLYTHVEGFKERREARKYASSLLKHGFLRHTVNKITFSEQCYYVFGDLCSNLATLNLNSGSSGASDQDTLAPLPHPAAPWPLGQGYPYQYPGPPPCFPPAYQDPGFSYGSGSTGSQQSEGSKSSGSTRSSRRAPGREKERRAAGAGGSGSESDHTAPSGVGSSWRERPAGQLSRGSSPRSQASATAPGLPPPHPTTKAYTVVGGPPGGPPVRELAAVPPELTGSRQSFQKAMGNPCEFFVDIM.

The region spanning 1–85 is the DIX domain; the sequence is MAETKIIYHM…RVVSWLVLAE (85 aa). Residues 89–237 are disordered; it reads SDAGSQGTDS…LRQADRASSF (149 aa). A compositionally biased stretch (basic residues) spans 142-151; sequence SHRRERARRR. Residues 152–171 are compositionally biased toward basic and acidic residues; that stretch reads NREEAARTNGHPRGDRRRDV. Low complexity predominate over residues 176-192; the sequence is DSASTALSSELESSSFV. Serine 194 is modified (phosphoserine). Residues 200-214 show a composition bias toward low complexity; the sequence is TSRLSSSTEQSTSSR. Positions 215 to 228 are enriched in basic residues; that stretch reads LIRKHKRRRRKQRL. A PDZ domain is found at 251–323; sequence TVTLNMERHH…NDDAVRVLRE (73 aa). The region spanning 400-474 is the DEP domain; that stretch reads PDSGLEIRDR…SEQCYYVFGD (75 aa). Positions 518 to 642 are disordered; that stretch reads PGPPPCFPPA…PGGPPVRELA (125 aa). The span at 526-555 shows a compositional bias: low complexity; sequence PAYQDPGFSYGSGSTGSQQSEGSKSSGSTR. The span at 600–611 shows a compositional bias: polar residues; the sequence is SRGSSPRSQASA.

It belongs to the DSH family. Interacts with CXXC4. Interacts (via PDZ domain) with NXN. Interacts with BRD7 and INVS. Interacts (via PDZ domain) with VANGL1 and VANGL2 (via C-terminus). Interacts with ARRB1; the interaction is enhanced by phosphorylation of DVL1. Interacts with CYLD. Interacts (via PDZ domain) with RYK. Self-associates (via DIX domain) and forms higher homooligomers. Interacts (via PDZ domain) with DACT1 and FZD7, where DACT1 and FZD7 compete for the same binding site. Interacts (via DEP domain) with MUSK; the interaction is direct and mediates the formation a DVL1, MUSK and PAK1 ternary complex involved in AChR clustering. Interacts (via PDZ domain) with TMEM88. Interacts with DCDC2. Interacts with FOXK2. Interacts with PKD1 (via extracellular domain). Interacts (via PDZ domain) with CCDC88C/DAPLE; competes with CCDC88C for binding to frizzled receptor FZD7 and dissociates from CCDC88C following initiation of non-canonical Wnt signaling when CCDC88C displaces DVL1 from ligand-activated FZD7. Ubiquitinated; undergoes both 'Lys-48'-linked ubiquitination, leading to its subsequent degradation by the ubiquitin-proteasome pathway, and 'Lys-63'-linked ubiquitination. The interaction with INVS is required for ubiquitination. Deubiquitinated by CYLD, which acts on 'Lys-63'-linked ubiquitin chains.

The protein localises to the cell membrane. It is found in the cytoplasm. Its subcellular location is the cytosol. It localises to the cytoplasmic vesicle. Its function is as follows. Participates in Wnt signaling by binding to the cytoplasmic C-terminus of frizzled family members and transducing the Wnt signal to down-stream effectors. Plays a role both in canonical and non-canonical Wnt signaling. Plays a role in the signal transduction pathways mediated by multiple Wnt genes. Required for LEF1 activation upon WNT1 and WNT3A signaling. DVL1 and PAK1 form a ternary complex with MUSK which is important for MUSK-dependent regulation of AChR clustering during the formation of the neuromuscular junction (NMJ). The protein is Segment polarity protein dishevelled homolog DVL-1 (DVL1) of Pan troglodytes (Chimpanzee).